Consider the following 172-residue polypeptide: RNA silencing suppressor p19 (172 aa).

Composition is skewed to basic and acidic residues over residues Met1–Ala14 and Ser150–Glu172. Disordered regions lie at residues Met1–Asp34 and Leu145–Glu172.

The protein belongs to the tombusvirus protein p19 family. In terms of assembly, homodimer.

Viral suppressor of RNA silencing which binds specifically to silencing RNAs (siRNAs). Acts as a molecular caliper to specifically select siRNAs based on the length of the duplex region of the RNA. The polypeptide is RNA silencing suppressor p19 (Cymbidium ringspot virus (CymRSV)).